A 100-amino-acid polypeptide reads, in one-letter code: Aspartyl/glutamyl-tRNA(Asn/Gln) amidotransferase subunit C (100 aa).

It belongs to the GatC family. As to quaternary structure, heterotrimer of A, B and C subunits.

The catalysed reaction is L-glutamyl-tRNA(Gln) + L-glutamine + ATP + H2O = L-glutaminyl-tRNA(Gln) + L-glutamate + ADP + phosphate + H(+). It carries out the reaction L-aspartyl-tRNA(Asn) + L-glutamine + ATP + H2O = L-asparaginyl-tRNA(Asn) + L-glutamate + ADP + phosphate + 2 H(+). Functionally, allows the formation of correctly charged Asn-tRNA(Asn) or Gln-tRNA(Gln) through the transamidation of misacylated Asp-tRNA(Asn) or Glu-tRNA(Gln) in organisms which lack either or both of asparaginyl-tRNA or glutaminyl-tRNA synthetases. The reaction takes place in the presence of glutamine and ATP through an activated phospho-Asp-tRNA(Asn) or phospho-Glu-tRNA(Gln). The chain is Aspartyl/glutamyl-tRNA(Asn/Gln) amidotransferase subunit C from Streptococcus thermophilus (strain ATCC BAA-491 / LMD-9).